The primary structure comprises 214 residues: EEF1A lysine methyltransferase 1 (214 aa).

Ser-2 bears the N-acetylserine mark. Ser-2 bears the Phosphoserine mark.

Belongs to the class I-like SAM-binding methyltransferase superfamily. EFM5 family.

Its subcellular location is the cytoplasm. It catalyses the reaction L-lysyl-[protein] + 3 S-adenosyl-L-methionine = N(6),N(6),N(6)-trimethyl-L-lysyl-[protein] + 3 S-adenosyl-L-homocysteine + 3 H(+). Functionally, protein-lysine methyltransferase that selectively catalyzes the trimethylation of EEF1A at 'Lys-79'. The polypeptide is EEF1A lysine methyltransferase 1 (Mus musculus (Mouse)).